Reading from the N-terminus, the 198-residue chain is LIM domain-containing protein D (198 aa).

In terms of domain architecture, LIM zinc-binding spans 5–65; sequence GKCTRCQKTV…ANHYPVGGLS (61 aa).

It localises to the cell projection. The protein resides in the pseudopodium. It is found in the cytoplasm. Its subcellular location is the cell cortex. The protein localises to the cytoskeleton. In terms of biological role, binds to F-actin and may modulate the chemotactic response during early development and contribute to the maintenance of the strength of the actin cytoskeleton. This Dictyostelium discoideum (Social amoeba) protein is LIM domain-containing protein D (limD).